Here is a 469-residue protein sequence, read N- to C-terminus: Protein apterous (469 aa).

Disordered stretches follow at residues 21 to 44 (GPGA…CGSA) and 111 to 141 (EVSD…DSKI). LIM zinc-binding domains are found at residues 148-200 (CSGC…CKND) and 210-263 (CSRC…CRTH). Positions 367–426 (TKRMRTSFKHHQLRTMKSYFAINHNPDAKDLKQLSQKTGLPKRVLQVWFQNARAKWRRMM) form a DNA-binding region, homeobox.

Expressed in PNS and CNS.

It is found in the nucleus. Its function is as follows. Required for the normal development of the wing and halter imaginal disks. The polypeptide is Protein apterous (ap) (Drosophila melanogaster (Fruit fly)).